We begin with the raw amino-acid sequence, 351 residues long: Peptide chain release factor 1 (351 aa).

An N5-methylglutamine modification is found at Gln229.

Belongs to the prokaryotic/mitochondrial release factor family. In terms of processing, methylated by PrmC. Methylation increases the termination efficiency of RF1.

Its subcellular location is the cytoplasm. In terms of biological role, peptide chain release factor 1 directs the termination of translation in response to the peptide chain termination codons UAG and UAA. The sequence is that of Peptide chain release factor 1 from Cereibacter sphaeroides (strain KD131 / KCTC 12085) (Rhodobacter sphaeroides).